A 244-amino-acid chain; its full sequence is Small ribosomal subunit protein uS3 (244 aa).

A KH type-2 domain is found at 39–107 (VREMLRKKLA…PAHINVTEVR (69 aa)). A disordered region spans residues 213 to 244 (VGQEKQDDSPRNDRNDRGDRGDRPSRPAREAR). Over residues 216–244 (EKQDDSPRNDRNDRGDRGDRPSRPAREAR) the composition is skewed to basic and acidic residues.

It belongs to the universal ribosomal protein uS3 family. In terms of assembly, part of the 30S ribosomal subunit. Forms a tight complex with proteins S10 and S14.

Functionally, binds the lower part of the 30S subunit head. Binds mRNA in the 70S ribosome, positioning it for translation. This Xanthomonas campestris pv. campestris (strain 8004) protein is Small ribosomal subunit protein uS3.